A 527-amino-acid polypeptide reads, in one-letter code: Rhamnogalacturonate lyase A (527 aa).

Residues 1–20 (MLSKTFLLSSAVLWARVANA) form the signal peptide. Residues asparagine 27 and asparagine 46 are each glycosylated (N-linked (GlcNAc...) asparagine). 2 cysteine pairs are disulfide-bonded: cysteine 50/cysteine 93 and cysteine 184/cysteine 193. N-linked (GlcNAc...) asparagine glycosylation occurs at asparagine 351.

The protein belongs to the polysaccharide lyase 4 family.

It is found in the secreted. The catalysed reaction is Endotype eliminative cleavage of L-alpha-rhamnopyranosyl-(1-&gt;4)-alpha-D-galactopyranosyluronic acid bonds of rhamnogalacturonan I domains in ramified hairy regions of pectin leaving L-rhamnopyranose at the reducing end and 4-deoxy-4,5-unsaturated D-galactopyranosyluronic acid at the non-reducing end.. In terms of biological role, pectinolytic enzymes consist of four classes of enzymes: pectin lyase, polygalacturonase, pectin methylesterase and rhamnogalacturonase. Degrades the rhamnogalacturonan I (RG-I) backbone of pectin. Active against linseed rhamnogalacturonan. This Emericella nidulans (strain FGSC A4 / ATCC 38163 / CBS 112.46 / NRRL 194 / M139) (Aspergillus nidulans) protein is Rhamnogalacturonate lyase A (rglA).